Consider the following 701-residue polypeptide: Elongation factor G (701 aa).

One can recognise a tr-type G domain in the interval 8–290; sequence TQYRNIGISA…AIIEYLPSPK (283 aa). GTP is bound by residues 17–24, 88–92, and 142–145; these read AHIDAGKT, DTPGH, and NKMD.

It belongs to the TRAFAC class translation factor GTPase superfamily. Classic translation factor GTPase family. EF-G/EF-2 subfamily.

Its subcellular location is the cytoplasm. Its function is as follows. Catalyzes the GTP-dependent ribosomal translocation step during translation elongation. During this step, the ribosome changes from the pre-translocational (PRE) to the post-translocational (POST) state as the newly formed A-site-bound peptidyl-tRNA and P-site-bound deacylated tRNA move to the P and E sites, respectively. Catalyzes the coordinated movement of the two tRNA molecules, the mRNA and conformational changes in the ribosome. The chain is Elongation factor G from Buchnera aphidicola subsp. Cinara cedri (strain Cc).